The chain runs to 544 residues: Chaperonin GroEL (544 aa).

ATP-binding positions include Thr-29–Pro-32, Asp-86–Thr-90, Gly-413, Asn-476–Ala-478, and Asp-492. Residues Pro-522–Met-544 form a disordered region. Positions Pro-524–Ala-538 are enriched in low complexity.

The protein belongs to the chaperonin (HSP60) family. In terms of assembly, forms a cylinder of 14 subunits composed of two heptameric rings stacked back-to-back. Interacts with the co-chaperonin GroES.

The protein resides in the cytoplasm. The catalysed reaction is ATP + H2O + a folded polypeptide = ADP + phosphate + an unfolded polypeptide.. In terms of biological role, together with its co-chaperonin GroES, plays an essential role in assisting protein folding. The GroEL-GroES system forms a nano-cage that allows encapsulation of the non-native substrate proteins and provides a physical environment optimized to promote and accelerate protein folding. The protein is Chaperonin GroEL of Lacticaseibacillus casei (strain BL23) (Lactobacillus casei).